The sequence spans 1313 residues: Target of rapamycin complex 1 subunit mip1 (1313 aa).

Residues 1–35 (MNDRISEVSGSSRARRSVLSYGTTETGSDRYTENS) form a disordered region. Phosphoserine is present on residues S834, S837, and S882. WD repeat units follow at residues 986–1029 (TFNN…NSFK), 1033–1074 (SATT…KVEL), 1087–1126 (GDRN…CYAN), 1130–1170 (RSSN…RDSL), 1176–1216 (EHSS…SLQT), 1219–1259 (TDNS…NTFR), and 1268–1308 (PKPS…IHTD).

Belongs to the WD repeat RAPTOR family. As to quaternary structure, the target of rapamycin complex 1 (TORC1) is composed of at least mip1, pop3/wat1, tco89, toc1 and tor2.

Its subcellular location is the cytoplasm. In terms of biological role, component of TORC1, which regulates multiple cellular processes to control cell growth in response to environmental signals. Tor2 is essential for growth. Nutrient limitation and environmental stress signals cause inactivation of TORC1. Active TORC1 positively controls cell growth and ribosome biogenesis by regulating ribosomal protein gene expression. TORC1 negatively controls G1 cell-cycle arrest, sexual development and amino acid uptake. Represses mating, meiosis and sporulation efficiency by interfering with the functions of the transcription factor ste11 and the meiosis-promoting RNA-binding protein mei2. This is Target of rapamycin complex 1 subunit mip1 from Schizosaccharomyces pombe (strain 972 / ATCC 24843) (Fission yeast).